The chain runs to 321 residues: Biotin synthase (321 aa).

The Radical SAM core domain occupies Phe45–Arg274. The [4Fe-4S] cluster site is built by Cys63, Cys67, and Cys70. The [2Fe-2S] cluster site is built by Cys139, Cys199, and Arg269.

It belongs to the radical SAM superfamily. Biotin synthase family. As to quaternary structure, homodimer. [4Fe-4S] cluster is required as a cofactor. [2Fe-2S] cluster serves as cofactor.

The catalysed reaction is (4R,5S)-dethiobiotin + (sulfur carrier)-SH + 2 reduced [2Fe-2S]-[ferredoxin] + 2 S-adenosyl-L-methionine = (sulfur carrier)-H + biotin + 2 5'-deoxyadenosine + 2 L-methionine + 2 oxidized [2Fe-2S]-[ferredoxin]. The protein operates within cofactor biosynthesis; biotin biosynthesis; biotin from 7,8-diaminononanoate: step 2/2. Its function is as follows. Catalyzes the conversion of dethiobiotin (DTB) to biotin by the insertion of a sulfur atom into dethiobiotin via a radical-based mechanism. The protein is Biotin synthase of Pelotomaculum thermopropionicum (strain DSM 13744 / JCM 10971 / SI).